We begin with the raw amino-acid sequence, 140 residues long: Nucleoside diphosphate kinase (140 aa).

Lysine 11, phenylalanine 59, arginine 87, threonine 93, arginine 104, and asparagine 114 together coordinate ATP. Catalysis depends on histidine 117, which acts as the Pros-phosphohistidine intermediate.

The protein belongs to the NDK family. As to quaternary structure, homotetramer. Requires Mg(2+) as cofactor.

Its subcellular location is the cytoplasm. It catalyses the reaction a 2'-deoxyribonucleoside 5'-diphosphate + ATP = a 2'-deoxyribonucleoside 5'-triphosphate + ADP. The enzyme catalyses a ribonucleoside 5'-diphosphate + ATP = a ribonucleoside 5'-triphosphate + ADP. Major role in the synthesis of nucleoside triphosphates other than ATP. The ATP gamma phosphate is transferred to the NDP beta phosphate via a ping-pong mechanism, using a phosphorylated active-site intermediate. In Cereibacter sphaeroides (strain ATCC 17029 / ATH 2.4.9) (Rhodobacter sphaeroides), this protein is Nucleoside diphosphate kinase.